The sequence spans 199 residues: Pneumococcal vaccine antigen A homolog (199 aa).

The protein resides in the cell surface. The polypeptide is Pneumococcal vaccine antigen A homolog (pvaA) (Streptococcus pyogenes serotype M1).